The chain runs to 192 residues: Ion-translocating oxidoreductase complex subunit B (192 aa).

The tract at residues methionine 1–serine 26 is hydrophobic. Residues glutamate 32 to valine 91 form the 4Fe-4S domain. The [4Fe-4S] cluster site is built by cysteine 49, cysteine 52, cysteine 57, cysteine 74, cysteine 117, cysteine 120, cysteine 123, cysteine 127, cysteine 147, cysteine 150, cysteine 153, and cysteine 157. 4Fe-4S ferredoxin-type domains follow at residues methionine 108–arginine 137 and alanine 138–valine 167.

Belongs to the 4Fe4S bacterial-type ferredoxin family. RnfB subfamily. In terms of assembly, the complex is composed of six subunits: RsxA, RsxB, RsxC, RsxD, RsxE and RsxG. [4Fe-4S] cluster serves as cofactor.

The protein localises to the cell inner membrane. In terms of biological role, part of a membrane-bound complex that couples electron transfer with translocation of ions across the membrane. Required to maintain the reduced state of SoxR. The chain is Ion-translocating oxidoreductase complex subunit B from Escherichia coli O81 (strain ED1a).